A 129-amino-acid polypeptide reads, in one-letter code: Large ribosomal subunit protein bL20 (129 aa).

The protein belongs to the bacterial ribosomal protein bL20 family.

In terms of biological role, binds directly to 23S ribosomal RNA and is necessary for the in vitro assembly process of the 50S ribosomal subunit. It is not involved in the protein synthesizing functions of that subunit. The polypeptide is Large ribosomal subunit protein bL20 (Rhodococcus jostii (strain RHA1)).